A 350-amino-acid chain; its full sequence is Ketol-acid reductoisomerase (NADP(+)) (350 aa).

The KARI N-terminal Rossmann domain maps to 4 to 187 (VSITTDYSRM…GGARANIIKT (184 aa)). NADP(+)-binding positions include 30-33 (YGSQ), Arg-53, Thr-58, and 88-91 (DMVQ). His-113 is an active-site residue. Position 139 (Gly-139) interacts with NADP(+). Residues 188 to 333 (TFKEETETDL…KQLRAKMVWL (146 aa)) enclose the KARI C-terminal knotted domain. Residues Asp-196, Glu-200, Glu-232, and Glu-236 each contribute to the Mg(2+) site. A substrate-binding site is contributed by Ser-257.

This sequence belongs to the ketol-acid reductoisomerase family. Mg(2+) serves as cofactor.

It catalyses the reaction (2R)-2,3-dihydroxy-3-methylbutanoate + NADP(+) = (2S)-2-acetolactate + NADPH + H(+). It carries out the reaction (2R,3R)-2,3-dihydroxy-3-methylpentanoate + NADP(+) = (S)-2-ethyl-2-hydroxy-3-oxobutanoate + NADPH + H(+). Its pathway is amino-acid biosynthesis; L-isoleucine biosynthesis; L-isoleucine from 2-oxobutanoate: step 2/4. It functions in the pathway amino-acid biosynthesis; L-valine biosynthesis; L-valine from pyruvate: step 2/4. Its function is as follows. Involved in the biosynthesis of branched-chain amino acids (BCAA). Catalyzes an alkyl-migration followed by a ketol-acid reduction of (S)-2-acetolactate (S2AL) to yield (R)-2,3-dihydroxy-isovalerate. In the isomerase reaction, S2AL is rearranged via a Mg-dependent methyl migration to produce 3-hydroxy-3-methyl-2-ketobutyrate (HMKB). In the reductase reaction, this 2-ketoacid undergoes a metal-dependent reduction by NADPH to yield (R)-2,3-dihydroxy-isovalerate. The protein is Ketol-acid reductoisomerase (NADP(+)) of Xylella fastidiosa (strain Temecula1 / ATCC 700964).